A 270-amino-acid polypeptide reads, in one-letter code: Hydroxyethylthiazole kinase (270 aa).

Met-47 is a substrate binding site. ATP is bound by residues Arg-123 and Ser-170. Gly-197 provides a ligand contact to substrate.

It belongs to the Thz kinase family. The cofactor is Mg(2+).

It carries out the reaction 5-(2-hydroxyethyl)-4-methylthiazole + ATP = 4-methyl-5-(2-phosphooxyethyl)-thiazole + ADP + H(+). It functions in the pathway cofactor biosynthesis; thiamine diphosphate biosynthesis; 4-methyl-5-(2-phosphoethyl)-thiazole from 5-(2-hydroxyethyl)-4-methylthiazole: step 1/1. Functionally, catalyzes the phosphorylation of the hydroxyl group of 4-methyl-5-beta-hydroxyethylthiazole (THZ). This Syntrophus aciditrophicus (strain SB) protein is Hydroxyethylthiazole kinase.